The sequence spans 334 residues: Stabilizer of axonemal microtubules 3 (334 aa).

Disordered regions lie at residues 81–105, 128–153, and 233–260; these read AYVP…PTRT, YQSS…YFGP, and QVWS…RVPR. Residues 128–141 are compositionally biased toward polar residues; the sequence is YQSSETRAQYTGSP. Over residues 240-251 the composition is skewed to pro residues; sequence QRPPCPRSSRPP.

This Homo sapiens (Human) protein is Stabilizer of axonemal microtubules 3.